Consider the following 479-residue polypeptide: MRILFVAAEAAPIAKVGGMGDVVGALPKFLREMGHDVRIFLPYYGFLPDKMEIPKEPIWRGSAMFQEFAVYESVLPGTDVPLYLFGHPVFLPRRIYSGDDEDWRFTFFSNGAAEFAWNYWKPDIIHCHDWHTGMIPVWMHQDPDITTVFTIHNLAYQGPWRWYLEKITWCPWYMQGHNTMAAAVQFANKVNTVSPTYAEQIKTPAYGETLEGLLSFISGKLSGIINGIDTEVYNPEDDKYIAQTFTTETLDKRKANKIALQEEVGLEVNSKAFLIGIVTRLVEQKGIDLILQILDRFLSYTDAQFVLLGTGDRYYETQMWQLASRFPGRMATYLLYNDALSRRIYAGTDAFLMPSRFEPCGISQMMSLRYGSVPIVRRTGGLVDTVSHHDPENAAGTGYCFDRYEPLDLFTCMIRAWEGFRFKPQWQELQKRGMSEDFSWYKSAKEYVKLYRSIYGLPEEEETPKPELVLNEAVTNSKS.

An ADP-alpha-D-glucose-binding site is contributed by Lys-15.

It belongs to the glycosyltransferase 1 family. Bacterial/plant glycogen synthase subfamily.

The catalysed reaction is [(1-&gt;4)-alpha-D-glucosyl](n) + ADP-alpha-D-glucose = [(1-&gt;4)-alpha-D-glucosyl](n+1) + ADP + H(+). It participates in glycan biosynthesis; glycogen biosynthesis. Its function is as follows. Synthesizes alpha-1,4-glucan chains using ADP-glucose. The sequence is that of Glycogen synthase from Nostoc punctiforme (strain ATCC 29133 / PCC 73102).